A 465-amino-acid polypeptide reads, in one-letter code: SET domain-containing protein 3 (465 aa).

The region spanning 18–265 (DKVTVKWDKK…AREELLDSYG (248 aa)) is the SET domain.

Belongs to the class V-like SAM-binding methyltransferase superfamily.

The polypeptide is SET domain-containing protein 3 (set-3) (Caenorhabditis elegans).